A 195-amino-acid polypeptide reads, in one-letter code: dTTP/UTP pyrophosphatase (195 aa).

Asp-70 (proton acceptor) is an active-site residue.

Belongs to the Maf family. YhdE subfamily. A divalent metal cation serves as cofactor.

Its subcellular location is the cytoplasm. It carries out the reaction dTTP + H2O = dTMP + diphosphate + H(+). The enzyme catalyses UTP + H2O = UMP + diphosphate + H(+). Its function is as follows. Nucleoside triphosphate pyrophosphatase that hydrolyzes dTTP and UTP. May have a dual role in cell division arrest and in preventing the incorporation of modified nucleotides into cellular nucleic acids. The chain is dTTP/UTP pyrophosphatase from Methanococcoides burtonii (strain DSM 6242 / NBRC 107633 / OCM 468 / ACE-M).